The primary structure comprises 681 residues: Cobalamin-dependent radical SAM methyltransferase TokK (681 aa).

Residues 1–144 (MSAELASRGR…ATRLSDHPDY (144 aa)) form the B12-binding domain. Residues Asn18, Ser72, Tyr74, Val75, His103, Gly126, and Glu127 each coordinate cob(II)alamin. In terms of domain architecture, Radical SAM core spans 192–417 (RGLRFYALWE…RMYVERPGTP (226 aa)). [4Fe-4S] cluster contacts are provided by Cys206 and Cys210. Phe212 contributes to the 5'-deoxyadenosine binding site. Cys213 provides a ligand contact to [4Fe-4S] cluster. Asp214 and Cys249 together coordinate cob(II)alamin. Residues Gln312, Glu349, and Gly384 each contribute to the 5'-deoxyadenosine site.

It belongs to the methyltransferase superfamily. [4Fe-4S] cluster is required as a cofactor. The cofactor is cob(II)alamin.

Its pathway is antibiotic biosynthesis. Its function is as follows. Methyltransferase involved in the biosynthesis of the beta-lactam carbapenem antibiotic asparenomycin. Catalyzes three consecutive S-adenosyl-L-methionine-dependent methylations to build out the C6-isopropyl side chain in a stereocontrolled manner. The polypeptide is Cobalamin-dependent radical SAM methyltransferase TokK (Streptomyces tokunonensis).